The following is a 616-amino-acid chain: DNA mismatch repair protein MutL (616 aa).

This sequence belongs to the DNA mismatch repair MutL/HexB family.

This protein is involved in the repair of mismatches in DNA. It is required for dam-dependent methyl-directed DNA mismatch repair. May act as a 'molecular matchmaker', a protein that promotes the formation of a stable complex between two or more DNA-binding proteins in an ATP-dependent manner without itself being part of a final effector complex. The chain is DNA mismatch repair protein MutL from Syntrophus aciditrophicus (strain SB).